A 475-amino-acid chain; its full sequence is MEIOTIC F-BOX protein MOF (475 aa).

The interval 1–58 (MRRERDATQIPENPMEGIPQTAAAAAAAAAAEASEPPRKRARVDGGGGGAGEEEEDRL) is disordered. A compositionally biased stretch (low complexity) spans 22 to 33 (AAAAAAAAAAEA). One can recognise an F-box domain in the interval 55 to 91 (EDRLSDLPDCLLEDILAHLGSRQAVQTSVLSRRWRNL).

This sequence belongs to the F-box protein family. FBX subfamily. In terms of assembly, part of a SCF (SKP1-CUL1-F-box protein) E3 ubiquitin-protein ligase complex. Interacts (via F-box domain) directly with SKP1. As to expression, highly expressed in the stem, leaf and in the anther during meiosis. Weakly expressed in roots and lemma/palea.

It is found in the nucleus. The protein resides in the chromosome. The protein operates within protein modification; protein ubiquitination. Probable component of a SCF (SKP1-CULLIN-F-box protein) E3 ubiquitin-protein ligase complex and may function through the ubiquitin-mediated protein degradation or signaling pathway. Required for male meiotic prophase I progression. Required for telomere bouquet formation, homologous chromosome pairing and for the formation of the synaptonemal complex (SC), which stabilizes initial chromosomal axial associations and promotes crossover formation. Involved in meiotic DNA double-strand break (DSB) end-processing and repair, and is important in the recruitment of DSB repair proteins to the DSB sites. The sequence is that of MEIOTIC F-BOX protein MOF from Oryza sativa subsp. japonica (Rice).